A 678-amino-acid polypeptide reads, in one-letter code: uncharacterized protein (678 aa).

8 helical membrane passes run 228 to 250, 263 to 285, 300 to 322, 334 to 356, 361 to 380, 387 to 405, 420 to 439, and 455 to 477; these read FFVI…FSFL, LAMW…VATQ, STGA…LSCV, MLHN…AVLF, FSLS…FFSA, RIML…YAYL, NVFF…TLFF, and NLLL…SVSL. The interval 653 to 678 is disordered; that stretch reads PSSQGVHATPEKNACIRDETVPNLQE.

The protein localises to the cell membrane. This is an uncharacterized protein from Treponema pallidum (strain Nichols).